A 187-amino-acid chain; its full sequence is Protein GrpE (187 aa).

Low complexity predominate over residues 1 to 17 (MSNEEQQQPNPAAQAPE). The segment at 1–27 (MSNEEQQQPNPAAQAPEGAVTEGAAPE) is disordered.

This sequence belongs to the GrpE family. As to quaternary structure, homodimer.

It localises to the cytoplasm. Functionally, participates actively in the response to hyperosmotic and heat shock by preventing the aggregation of stress-denatured proteins, in association with DnaK and GrpE. It is the nucleotide exchange factor for DnaK and may function as a thermosensor. Unfolded proteins bind initially to DnaJ; upon interaction with the DnaJ-bound protein, DnaK hydrolyzes its bound ATP, resulting in the formation of a stable complex. GrpE releases ADP from DnaK; ATP binding to DnaK triggers the release of the substrate protein, thus completing the reaction cycle. Several rounds of ATP-dependent interactions between DnaJ, DnaK and GrpE are required for fully efficient folding. This is Protein GrpE from Thioalkalivibrio sulfidiphilus (strain HL-EbGR7).